Consider the following 554-residue polypeptide: Glucose-6-phosphate isomerase (554 aa).

The Proton donor role is filled by Glu-358. Catalysis depends on residues His-389 and Lys-515. The segment covering Ser-527–Asp-540 has biased composition (polar residues). The disordered stretch occupies residues Ser-527–Gly-554. A compositionally biased stretch (basic residues) spans Arg-544–Gly-554.

This sequence belongs to the GPI family.

It localises to the cytoplasm. It catalyses the reaction alpha-D-glucose 6-phosphate = beta-D-fructose 6-phosphate. It functions in the pathway carbohydrate biosynthesis; gluconeogenesis. Its pathway is carbohydrate degradation; glycolysis; D-glyceraldehyde 3-phosphate and glycerone phosphate from D-glucose: step 2/4. Functionally, catalyzes the reversible isomerization of glucose-6-phosphate to fructose-6-phosphate. The protein is Glucose-6-phosphate isomerase of Mycobacterium ulcerans (strain Agy99).